The sequence spans 576 residues: Sulfite reductase [NADPH] hemoprotein beta-component (576 aa).

4 residues coordinate [4Fe-4S] cluster: Cys-435, Cys-441, Cys-480, and Cys-484. Cys-484 serves as a coordination point for siroheme.

Belongs to the nitrite and sulfite reductase 4Fe-4S domain family. As to quaternary structure, alpha(8)-beta(8). The alpha component is a flavoprotein, the beta component is a hemoprotein. Siroheme serves as cofactor. The cofactor is [4Fe-4S] cluster.

The catalysed reaction is hydrogen sulfide + 3 NADP(+) + 3 H2O = sulfite + 3 NADPH + 4 H(+). It participates in sulfur metabolism; hydrogen sulfide biosynthesis; hydrogen sulfide from sulfite (NADPH route): step 1/1. Functionally, component of the sulfite reductase complex that catalyzes the 6-electron reduction of sulfite to sulfide. This is one of several activities required for the biosynthesis of L-cysteine from sulfate. This Proteus mirabilis (strain HI4320) protein is Sulfite reductase [NADPH] hemoprotein beta-component.